Consider the following 1977-residue polypeptide: Voltage-dependent L-type calcium channel subunit alpha-1F (1977 aa).

The span at 1 to 11 (MSESEGGKDTT) shows a compositional bias: basic and acidic residues. The tract at residues 1 to 60 (MSESEGGKDTTPEPSPANGAGPGPEWGLCPGPPAVEGESSGASGLGTPKRRNQHSKHKTV) is disordered. Topologically, residues 1-92 (MSESEGGKDT…RSCISIVEWK (92 aa)) are cytoplasmic. A compositionally biased stretch (basic residues) spans 48–59 (PKRRNQHSKHKT). One copy of the I repeat lies at 79 to 375 (NPLRRSCISI…LVLGVLSGEF (297 aa)). A helical transmembrane segment spans residues 93-111 (PFDILILLTIFANCVALGV). At 112-129 (YIPFPEDDSNTANHNLEQ) the chain is on the extracellular side. Residues 130–149 (VEYVFLVIFTVETVLKIVAY) form a helical membrane-spanning segment. At 150 to 161 (GLVLHPSAYIRN) the chain is on the cytoplasmic side. The chain crosses the membrane as a helical span at residues 162-180 (GWNLLDFIIVVVGLFSVLL). Over 181-201 (EQGPGRPGDAPHTGGKPGGFD) the chain is Extracellular. Residues 202-220 (VKALRAFRVLRPLRLVSGV) form a helical membrane-spanning segment. The Cytoplasmic segment spans residues 221-239 (PSLHIVLNSIMKALVPLLH). The helical transmembrane segment at 240–259 (IALLVLFVIIIYAIIGLELF) threads the bilayer. Over 260 to 347 (LGRMHKTCYF…WMQDAMGYEL (88 aa)) the chain is Extracellular. An N-linked (GlcNAc...) asparagine glycan is attached at N295. E330 serves as a coordination point for Ca(2+). A helical membrane pass occupies residues 348–372 (PWVYFVSLVIFGSFFVLNLVLGVLS). Over 373–529 (GEFSKEREKA…ARCRRAVKSN (157 aa)) the chain is Cytoplasmic. Positions 395–412 (QQMEEDLRGYLDWITQAE) are binding to the beta subunit. 2 disordered regions span residues 418-441 (DPSADDNLGSMAEEGRAGHRPQLA) and 455-488 (SHSTRSTHSTSSHASLPASDTGSMTETQGDEDEE). A compositionally biased stretch (low complexity) spans 455-469 (SHSTRSTHSTSSHAS). One copy of the II repeat lies at 515–761 (NRVLRARCRR…VFLAIAVDNL (247 aa)). Residues 530 to 549 (ACYWAVLLLVFLNTLTIASE) form a helical membrane-spanning segment. The Extracellular segment spans residues 550-564 (HHGQPVWLTQIQEYA). A helical membrane pass occupies residues 565-583 (NKVLLCLFTVEMLLKLYGL). Topologically, residues 584–591 (GPSAYVSS) are cytoplasmic. The chain crosses the membrane as a helical span at residues 592-610 (FFNRFDCFVVCGGILETTL). The Extracellular segment spans residues 611-620 (VEVGAMQPLG). A helical transmembrane segment spans residues 621–639 (ISVLRCVRLLRIFKVTRHW). Topologically, residues 640–658 (ASLSNLVASLLNSMKSIAS) are cytoplasmic. A helical membrane pass occupies residues 659–679 (LLLLLFLFIIIFSLLGMQLFG). Residues 680-733 (GKFNFDQTHTKRSTFDTFPQALLTVFQILTGEDWNVVMYDGIMAYGGPFFPGML) are Extracellular-facing. E711 serves as a coordination point for Ca(2+). A helical transmembrane segment spans residues 734–758 (VCIYFIILFICGNYILLNVFLAIAV). Residues 759 to 871 (DNLASGDAGT…KGCHTLIHHH (113 aa)) lie on the Cytoplasmic side of the membrane. Residues 767–830 (GTAKDKGGEK…EEEEEGAGGV (64 aa)) are disordered. Positions 768-783 (TAKDKGGEKSNEKDLP) are enriched in basic and acidic residues. Residues 807-826 (DMEEEEEEEEEEEEEEEEEG) are compositionally biased toward acidic residues. An III repeat occupies 858 to 1140 (NPLRKGCHTL…IFVGFVIITF (283 aa)). The chain crosses the membrane as a helical span at residues 872 to 890 (VFTNLILVFIILSSVSLAA). Residues 891 to 906 (EDPIRAHSFRNHILGY) are Extracellular-facing. The chain crosses the membrane as a helical span at residues 907–926 (FDYAFTSIFTVEILLKMTVF). The Cytoplasmic portion of the chain corresponds to 927 to 938 (GAFLHRGSFCRS). A helical membrane pass occupies residues 939–957 (WFNMLDLLVVSVSLISFGI). The Extracellular portion of the chain corresponds to 958-963 (HSSAIS). Residues 964-983 (VVKILRVLRVLRPLRAINRA) traverse the membrane as a helical segment. The Cytoplasmic portion of the chain corresponds to 984 to 1002 (KGLKHVVQCVFVAIRTIGN). Residues 1003 to 1022 (IMIVTTLLQFMFACIGVQLF) form a helical membrane-spanning segment. Topologically, residues 1023 to 1112 (KGKFYTCTDE…HGPIYNYRVE (90 aa)) are extracellular. Residues 1060-1150 (RLWVNSDFNF…RAQGEQEYQN (91 aa)) form a dihydropyridine binding region. Residue E1086 coordinates Ca(2+). Residues 1113–1133 (ISVFFIVYIIIIAFFMMNIFV) traverse the membrane as a helical segment. At 1134 to 1190 (GFVIITFRAQGEQEYQNCELDKNQRQCVEYALKAQPLRRYIPKNPHQYRVWATVNSA) the chain is on the cytoplasmic side. One copy of the IV repeat lies at 1177–1444 (NPHQYRVWAT…LFVAVIMDNF (268 aa)). A helical membrane pass occupies residues 1191-1209 (AFEYLMFLLILLNTVALAM). At 1210–1224 (QHYEQTAPFNYAMDI) the chain is on the extracellular side. A helical membrane pass occupies residues 1225–1244 (LNMVFTGLFTIEMVLKIIAF). Residues 1245-1251 (KPKHYFT) lie on the Cytoplasmic side of the membrane. A helical transmembrane segment spans residues 1252–1273 (DAWNTFDALIVVGSIVDIAVTE). At 1274 to 1290 (VNNGGHLGESSEDSSRI) the chain is on the extracellular side. Residues 1291–1310 (SITFFRLFRVMRLVKLLSKG) traverse the membrane as a helical segment. The Cytoplasmic segment spans residues 1311–1329 (EGIRTLLWTFIKSFQALPY). Residues 1330-1349 (VALLIAMIFFIYAVIGMQMF) form a helical membrane-spanning segment. Over 1350–1416 (GKVALQDGTQ…GEEFTCGSNF (67 aa)) the chain is Extracellular. The interval 1397-1463 (RCDPESDFGP…LGPHHLDEFK (67 aa)) is dihydropyridine binding. The phenylalkylamine binding stretch occupies residues 1409 to 1452 (EFTCGSNFAIAYFISFFMLCAFLIINLFVAVIMDNFDYLTRDWS). Residues 1417–1441 (AIAYFISFFMLCAFLIINLFVAVIM) traverse the membrane as a helical segment. Over 1442–1977 (DNFDYLTRDW…GDEMACVHAL (536 aa)) the chain is Cytoplasmic. 2 disordered regions span residues 1637–1754 (CDTE…EVPD) and 1816–1841 (DLPIPGTYHRGRNSGPNRAQGSWATP). Residues 1638–1657 (DTEEEEEEGQEGVEEEDEKD) are compositionally biased toward acidic residues. 4 stretches are compositionally biased toward polar residues: residues 1661–1670 (NKATMVSQPS), 1702–1716 (TPTSSQPSVPQAGSN), 1733–1743 (GNSQPKGTKGQ), and 1829–1840 (SGPNRAQGSWAT).

The protein belongs to the calcium channel alpha-1 subunit (TC 1.A.1.11) family. CACNA1F subfamily. In terms of assembly, voltage-dependent calcium channels are multisubunit complexes, consisting of alpha-1, alpha-2, beta and delta subunits in a 1:1:1:1 ratio. The channel activity is directed by the pore-forming and voltage-sensitive alpha-1 subunit. In many cases, this subunit is sufficient to generate voltage-sensitive calcium channel activity. The auxiliary subunits beta and alpha-2/delta linked by a disulfide bridge regulate the channel activity. Interacts (via IQ domain) with CABP4; in a calcium independent manner. As to quaternary structure, interacts with CABP4; suppresses robust calcium-dependent inactivation of channel without enhancing the hyperpolarized voltage-dependent activation. Expression in skeletal muscle and retina. Isoform 4 is expressed in retina.

It localises to the membrane. The enzyme catalyses Ca(2+)(in) = Ca(2+)(out). In terms of biological role, voltage-sensitive calcium channels (VSCC) mediate the entry of calcium ions into excitable cells and are also involved in a variety of calcium-dependent processes, including muscle contraction, hormone or neurotransmitter release, gene expression, cell motility, cell division and cell death. The isoform alpha-1F gives rise to L-type calcium currents. Long-lasting (L-type) calcium channels belong to the 'high-voltage activated' (HVA) group. They are blocked by dihydropyridines (DHP), phenylalkylamines, and by benzothiazepines. Activates at more negative voltages and does not undergo calcium-dependent inactivation (CDI), due to incoming calcium ions, during depolarization. Its function is as follows. Voltage-dependent L-type calcium channel activates at more hyperpolarized voltages and exhibits a robust calcium-dependent inactivation (CDI), due to incoming calcium ions, during depolarizations. Voltage-sensitive calcium channels (VSCC) mediate the entry of calcium ions into excitable cells and are also involved in a variety of calcium-dependent processes, including muscle contraction, hormone or neurotransmitter release, gene expression, cell motility, cell division and cell death. The protein is Voltage-dependent L-type calcium channel subunit alpha-1F of Homo sapiens (Human).